The primary structure comprises 309 residues: Probable pyridoxal 5'-phosphate synthase subunit PDX1 (309 aa).

Asp40 lines the D-ribose 5-phosphate pocket. The active-site Schiff-base intermediate with D-ribose 5-phosphate is the Lys97. A D-ribose 5-phosphate-binding site is contributed by Gly169. Residue Arg181 coordinates D-glyceraldehyde 3-phosphate. D-ribose 5-phosphate-binding positions include Gly230 and 251–252; that span reads GS.

It belongs to the PdxS/SNZ family.

The catalysed reaction is aldehydo-D-ribose 5-phosphate + D-glyceraldehyde 3-phosphate + L-glutamine = pyridoxal 5'-phosphate + L-glutamate + phosphate + 3 H2O + H(+). Its pathway is cofactor biosynthesis; pyridoxal 5'-phosphate biosynthesis. Its function is as follows. Catalyzes the formation of pyridoxal 5'-phosphate from ribose 5-phosphate (RBP), glyceraldehyde 3-phosphate (G3P) and ammonia. The ammonia is provided by PDX2. Can also use ribulose 5-phosphate and dihydroxyacetone phosphate as substrates, resulting from enzyme-catalyzed isomerization of RBP and G3P, respectively. Also plays an indirect role in resistance to singlet oxygen-generating photosensitizers. In Ginkgo biloba (Ginkgo), this protein is Probable pyridoxal 5'-phosphate synthase subunit PDX1 (PDX1).